A 240-amino-acid polypeptide reads, in one-letter code: Uridylate kinase (240 aa).

13–16 (KFSG) contacts ATP. Glycine 55 provides a ligand contact to UMP. Residues glycine 56 and arginine 60 each contribute to the ATP site. Residues aspartate 76 and 137–144 (TGNPFFTT) each bind UMP. The ATP site is built by threonine 164, tyrosine 170, and aspartate 173.

Belongs to the UMP kinase family. As to quaternary structure, homohexamer.

It is found in the cytoplasm. It catalyses the reaction UMP + ATP = UDP + ADP. It functions in the pathway pyrimidine metabolism; CTP biosynthesis via de novo pathway; UDP from UMP (UMPK route): step 1/1. Inhibited by UTP. Catalyzes the reversible phosphorylation of UMP to UDP. The sequence is that of Uridylate kinase from Helicobacter acinonychis (strain Sheeba).